The sequence spans 235 residues: Phosphoribosylaminoimidazole-succinocarboxamide synthase (235 aa).

It belongs to the SAICAR synthetase family.

The enzyme catalyses 5-amino-1-(5-phospho-D-ribosyl)imidazole-4-carboxylate + L-aspartate + ATP = (2S)-2-[5-amino-1-(5-phospho-beta-D-ribosyl)imidazole-4-carboxamido]succinate + ADP + phosphate + 2 H(+). The protein operates within purine metabolism; IMP biosynthesis via de novo pathway; 5-amino-1-(5-phospho-D-ribosyl)imidazole-4-carboxamide from 5-amino-1-(5-phospho-D-ribosyl)imidazole-4-carboxylate: step 1/2. The sequence is that of Phosphoribosylaminoimidazole-succinocarboxamide synthase from Clostridium kluyveri (strain NBRC 12016).